The primary structure comprises 1479 residues: MIERGKFRSLTLVNWNGFFARTFDLDELVTTLSGGNGAGKSTTMAAFITALIPDLTLLHFRNTTEAGATSGSRDKGLHGKLRAGVCYSTLDVVNSRHQRVLVGVRLQQVAGRDRKVDIKPFTIQGLPTAIQPTQILTQVVGDRQARVLSLQELKDRVEEMEGVQFKQFNSITDYHSLMFDLGVVPRRLRSASDRSKFYRLIEASLYGGISSAITRSLRDYLLPENSGVRKAFQDMEAALRENRMTLEAIRVTQSDRDLFKHLISEATSYVAADYMRHANERRIHLDGALELRRDLFSSRKQLSSEQYRHVEMARELAEQSGAEGDLETDYQAASDHLNLVQTAMRQQEKIERYNADLEELSYRLEEQNEVVEEAREQQAENEERADAAELEVDELKSQLADYQQALDVQQTRAIQYQQAQQALERARTLCQLPDLTADNADEWLDSYQAKEQEATEILLMLEQKLSVADAAHGQFEQAYQLVSKIAGAVNRNEAWQVARDLLRDSSSQRYQAERVQPLRMRLSELEQRLREQQDAERLLQDFSKRNGQDYQPEELESLQQELDARIETLSSLVAEAGERRMALRQELEQIQLRIQKLTTRAPVWLAAQEMLTQLSEQSGETFEDSRQVTEFMQQLLERERETTVERDDIASRKRQIEAQIERLSQPGGSEDPRLNALAERFGGVLLSEIYDDVTLDDAPYFSALYGPSRHAIVVADLSLVREQLAGLEDCPEDLYLIEGDPQSFDDSVFAVEELERAVVVKVAERQWRYSRFPEVPLFGRAAREMRLESLRDEREALAEQYATLSFDVQKTQRLHQSFSRFIGTHLAVVFDEDPEAEIRTLSSRRGELDRAIASFDGENQQQRQQYEQAKEASVQLNKLIPRISLLCDETLQDRVEEIRAELDETEESARFIQQHGATLVKLEPLVSVLQSDPQQHEQLQEDYAQAQNAQRQAKQQAFALTEVVQRRAHFSYADSAGMLGENAGLNDKLRHRLELAEAERTKAREQLRQHQAQLTQYSQVQASLKSSYDAKQDMLKELTQELQDIGVRADADAEERARQRRDELHAALSTNRSRRNQLEKQITFCEAEMDSLQKKLRKLERDYHQMREQVVTAKAGWCAVMRLVKDNGVERRLHRRELAYMEGDELRSMSDKALGALRLAVADNEHLRDVLRLSEDPKRPERKIQFYIAVYQHLRERIRQDIIRTDDPVEAIEQMEIELNRLTEELTAREQMLAISSRSVANIIRKTIQREQNRIRMLNQGLQAVAFGQVKSVRLNVNVRETHTTLLNVLSEQQEMHQDLFNSNRLTFSEALAKLYQRLNPEIDMGQRTPQTIGEELLDYRNYLEMEVEVNRGADGWLRAESGALSTGEAIGTGMSILVMVVQSWEEESKRLRGKDIIPCRLLFLDEAARLDAKSIATLFELCDRLEMQLVIAAPENISPEKGTTYKLVRKVYQNNEHVHVVGLRGFGAEAPDTQEQAS.

Position 34-41 (34-41 (GGNGAGKS)) interacts with ATP. Coiled coils occupy residues 337-418 (LNLV…QYQQ), 511-603 (QAER…RAPV), 780-810 (RAAREMRLESLRDEREALAEQYATLSFDVQK), 847-1116 (ELDR…AKAG), and 1206-1265 (DDPV…LQAV). The interval 666–783 (PGGSEDPRLN…EVPLFGRAAR (118 aa)) is flexible hinge.

The protein belongs to the SMC family. MukB subfamily. As to quaternary structure, homodimerization via its hinge domain. Binds to DNA via its C-terminal region. Interacts, and probably forms a ternary complex, with MukE and MukF via its C-terminal region. The complex formation is stimulated by calcium or magnesium. Interacts with tubulin-related protein FtsZ.

The protein resides in the cytoplasm. It localises to the nucleoid. Plays a central role in chromosome condensation, segregation and cell cycle progression. Functions as a homodimer, which is essential for chromosome partition. Involved in negative DNA supercoiling in vivo, and by this means organize and compact chromosomes. May achieve or facilitate chromosome segregation by condensation DNA from both sides of a centrally located replisome during cell division. The chain is Chromosome partition protein MukB from Pectobacterium carotovorum subsp. carotovorum (strain PC1).